We begin with the raw amino-acid sequence, 571 residues long: Urease subunit alpha (571 aa).

A Urease domain is found at 132-571 (GGIDAHIHFI…VALAQRYFLF (440 aa)). Ni(2+) is bound by residues His-137, His-139, and Lys-220. Lys-220 bears the N6-carboxylysine mark. His-222 is a binding site for substrate. The Ni(2+) site is built by His-249 and His-275. His-323 acts as the Proton donor in catalysis. Asp-363 is a Ni(2+) binding site.

The protein belongs to the metallo-dependent hydrolases superfamily. Urease alpha subunit family. Heterotrimer of UreA (gamma), UreB (beta) and UreC (alpha) subunits. Three heterotrimers associate to form the active enzyme. It depends on Ni cation as a cofactor. Carboxylation allows a single lysine to coordinate two nickel ions.

The protein localises to the cytoplasm. It catalyses the reaction urea + 2 H2O + H(+) = hydrogencarbonate + 2 NH4(+). Its pathway is nitrogen metabolism; urea degradation; CO(2) and NH(3) from urea (urease route): step 1/1. The sequence is that of Urease subunit alpha from Halalkalibacterium halodurans (strain ATCC BAA-125 / DSM 18197 / FERM 7344 / JCM 9153 / C-125) (Bacillus halodurans).